The chain runs to 253 residues: Hydroxyacylglutathione hydrolase (253 aa).

Residues His54, His56, Asp58, His59, His112, Asp131, and His169 each contribute to the Zn(2+) site.

The protein belongs to the metallo-beta-lactamase superfamily. Glyoxalase II family. Monomer. Zn(2+) is required as a cofactor.

The enzyme catalyses an S-(2-hydroxyacyl)glutathione + H2O = a 2-hydroxy carboxylate + glutathione + H(+). It functions in the pathway secondary metabolite metabolism; methylglyoxal degradation; (R)-lactate from methylglyoxal: step 2/2. Functionally, thiolesterase that catalyzes the hydrolysis of S-D-lactoyl-glutathione to form glutathione and D-lactic acid. The protein is Hydroxyacylglutathione hydrolase of Bartonella quintana (strain Toulouse) (Rochalimaea quintana).